Consider the following 377-residue polypeptide: tRNA-specific 2-thiouridylase MnmA (377 aa).

Residues 8–15 and M34 each bind ATP; that span reads GMSGGVDS. The tract at residues 94 to 96 is interaction with target base in tRNA; the sequence is NPD. C99 serves as the catalytic Nucleophile. C99 and C201 are joined by a disulfide. G123 provides a ligand contact to ATP. Residues 151–153 form an interaction with tRNA region; sequence KDQ. The active-site Cysteine persulfide intermediate is the C201. The tract at residues 315-316 is interaction with tRNA; that stretch reads RY.

It belongs to the MnmA/TRMU family.

The protein resides in the cytoplasm. It catalyses the reaction S-sulfanyl-L-cysteinyl-[protein] + uridine(34) in tRNA + AH2 + ATP = 2-thiouridine(34) in tRNA + L-cysteinyl-[protein] + A + AMP + diphosphate + H(+). Its function is as follows. Catalyzes the 2-thiolation of uridine at the wobble position (U34) of tRNA, leading to the formation of s(2)U34. The protein is tRNA-specific 2-thiouridylase MnmA of Acinetobacter baumannii (strain SDF).